A 562-amino-acid chain; its full sequence is MDTKTLIANDIAKVVPELDQETIYNLLETPKNSDMGDVAFPAFSLAKVLRKAPQMIAGELAEKIDAAQYEKVMAVGPYINFFLDKSSISKEVLEAVIKEKANYGQQHIGDGQNVTLDMSSPNIAKPFSVGHLRSTVIADAIGHIYSKLGYNSIRINHLGDWGKQFGMLIVAYKLWGDRATVEANPIDELLKLYVRINAEAEENPELDEQARQWFKKLEDGDKEAWDLWQWFRDESLVEFNRIYDKLDVSFDHFHGEAFYNDKMDEGIQILEDKNLLKESKGAQIVDLEKYNLPPALIKKSDGATLYITRDMATAMYRQRTFNFVKNIYVVGQEQSHHFKQLKAVLKEMGFDWSDDMIHVSFGLVTKNKKKLSTRKGNIIRLEPTLDEAVSRALTQIEAKNPDLENKEDVAHAVGVGAVKFYDLKTDRDNGYDFDLEAMVSFEGETGPYVQYTYARIQSILRKADFTPNEETPYSLNDAESWEIIKLLQGFAANIERAAEKYDPSIIAKFAIQLAQSFNRYYAHTRILDESEERDSRLALCYATAVVLKESLRLLGVQAPEKM.

Positions 121 to 131 match the 'HIGH' region motif; sequence PNIAKPFSVGH.

Belongs to the class-I aminoacyl-tRNA synthetase family. In terms of assembly, monomer.

It localises to the cytoplasm. The catalysed reaction is tRNA(Arg) + L-arginine + ATP = L-arginyl-tRNA(Arg) + AMP + diphosphate. The chain is Arginine--tRNA ligase from Streptococcus uberis (strain ATCC BAA-854 / 0140J).